The sequence spans 421 residues: MSAHSMLCERIAIAKELIKRAESLSRSRKGGIEGGAKLCSKLKAELKFLQKVEAGKVAIKESHLQSTNLTHLRAIVESAENLEEVVSVLHVFGYTDTFGEKQTLVVDVVANGGHTWVKAIGRKAEALHNIWLGRGQYGDKSIIEQAEDFLQASHQQPVQYSNPHIIFAFYNSVSSPMAEKLKEMGISVRGDIVAVNSLLDHPEELQPSESESDDEGPELLQVTRVDRENILASVAFPTEIKVDVCKRVNLDITTLITYVSALSYGGCHFIFKEKVLTEQAEQERKEQVLPQLEAFMKDKELFACESAVKDFQSILDTLGGPGERERAAMLIKRINVVPDQPSERALKLVASSKINSRSLTIFGTGDNLKAITMTANSGFVRAANNQGVKFSVFIHQPRALTESKEALATPLPKDCTTDSEH.

Belongs to the UPF0415 family.

The polypeptide is UPF0415 protein C7orf25 homolog (Bos taurus (Bovine)).